The chain runs to 292 residues: Elongation factor Ts (292 aa).

An involved in Mg(2+) ion dislocation from EF-Tu region spans residues 80 to 83; it reads TDFV.

The protein belongs to the EF-Ts family.

The protein resides in the cytoplasm. In terms of biological role, associates with the EF-Tu.GDP complex and induces the exchange of GDP to GTP. It remains bound to the aminoacyl-tRNA.EF-Tu.GTP complex up to the GTP hydrolysis stage on the ribosome. The chain is Elongation factor Ts from Ralstonia pickettii (strain 12J).